Reading from the N-terminus, the 195-residue chain is uncharacterized protein (195 aa).

A Nudix hydrolase domain is found at Ser-34–Asn-165. The Nudix box motif lies at Gly-72 to Ala-94. Mg(2+) contacts are provided by Glu-88 and Glu-92.

Belongs to the Nudix hydrolase family. PCD1 subfamily. Mn(2+) is required as a cofactor. Mg(2+) serves as cofactor.

In terms of biological role, probably mediates the hydrolysis of some nucleoside diphosphate derivatives. This is an uncharacterized protein from Yersinia enterocolitica serotype O:8 / biotype 1B (strain NCTC 13174 / 8081).